The chain runs to 521 residues: Cytochrome P450 1A1 (521 aa).

F229 lines the substrate pocket. Position 463 (C463) interacts with heme.

It belongs to the cytochrome P450 family. Heme serves as cofactor.

The protein localises to the endoplasmic reticulum membrane. It localises to the microsome membrane. The enzyme catalyses an organic molecule + reduced [NADPH--hemoprotein reductase] + O2 = an alcohol + oxidized [NADPH--hemoprotein reductase] + H2O + H(+). In terms of biological role, cytochromes P450 are a group of heme-thiolate monooxygenases. They oxidize a variety of structurally unrelated compounds, including steroids, fatty acids, and xenobiotics. This chain is Cytochrome P450 1A1 (cyp1a1), found in Opsanus tau (Oyster toadfish).